A 941-amino-acid polypeptide reads, in one-letter code: MPMPTVSMSPALTALIERAVARVRQSLPVEQAWPGGEFDRQLAQVALASEFALDTLARQPALLQHLAQPDPPPLPLPQFDPAQPQLWPAQLRRYRSAESTRLVWRDVLGLDSVEATLAGATQLAEHCLQCGLQALEQQFHTRHGKVVAADGSVQRLVVFGLGKLGGGELNFSSDVDLVYAYPQGGQSDGARPLAAEEYFARLGQQLARLLDETTADGFSHRVDLRLRPFGTAGRVALSFAGMDQYFQREGRDWERYAWLKARAVAGDIDAGEAWLETLRPFVYRRYLDFTALDGLREMKAAITAEVARHDRLDDIKRGPGGIREIEFLAQSLQLIRGGREPSLRERRLLPALQALVAAGQIDQENGQALSTAYRFLRRLENRLQMLRDAQTHALPQAPLDRERIALGLGYAQWSALLDALAPQRARVAAEFAELLAPRVRATAPDALADYWRALPDGDAAPLAGIGLNDPDGAHRALADFAQSSGVRALSDSARARLDRVMPALLHAATRASQPDAAVRRMLGLLQATLRRTSYLALLDEQPSALARLVDVLSRSALLAERLAAYPLLLDELLDTRISGPLPDRAALHAACAHTLHIDDTEAALRELNERRLALSFRIALATLDGRQQAVESTRQLAWLAEAVVQTVLHLARSDMLAAHGHVPGGSFAIVGYGSLGGLELGFGSDLDLVFLYDHPREVDASDGKRPLDAGRWFARLAQKVMALLAAETGAGRLYDIDVRLRPDGGKGALVSSLASYREYQRDRAWTWEHQALVRARAVAGDAALCDAFAQVRRDTLMRVRDTAQLHEDVRKMRARMRAELDRSDAGRLDLKQGAGGLVDLEFVLQAGVLGLAAQQPQLLDACDTPALIDALARTHWLPDESAAPLHQAHATLVDAGLSCTLDRRPRLIAPTPAIQQARGIIFNAARGQGLTFPLGKDETAL.

Residues 1–437 form an adenylyl removase region; sequence MPMPTVSMSP…AAEFAELLAP (437 aa). The adenylyl transferase stretch occupies residues 444–941; it reads PDALADYWRA…FPLGKDETAL (498 aa).

This sequence belongs to the GlnE family. The cofactor is Mg(2+).

It carries out the reaction [glutamine synthetase]-O(4)-(5'-adenylyl)-L-tyrosine + phosphate = [glutamine synthetase]-L-tyrosine + ADP. The enzyme catalyses [glutamine synthetase]-L-tyrosine + ATP = [glutamine synthetase]-O(4)-(5'-adenylyl)-L-tyrosine + diphosphate. Functionally, involved in the regulation of glutamine synthetase GlnA, a key enzyme in the process to assimilate ammonia. When cellular nitrogen levels are high, the C-terminal adenylyl transferase (AT) inactivates GlnA by covalent transfer of an adenylyl group from ATP to specific tyrosine residue of GlnA, thus reducing its activity. Conversely, when nitrogen levels are low, the N-terminal adenylyl removase (AR) activates GlnA by removing the adenylyl group by phosphorolysis, increasing its activity. The regulatory region of GlnE binds the signal transduction protein PII (GlnB) which indicates the nitrogen status of the cell. This chain is Bifunctional glutamine synthetase adenylyltransferase/adenylyl-removing enzyme, found in Xanthomonas axonopodis pv. citri (strain 306).